We begin with the raw amino-acid sequence, 689 residues long: Elongation factor G (689 aa).

One can recognise a tr-type G domain in the interval 8–282 (KKTRNIGIMA…AVIDYLPSPV (275 aa)). GTP-binding positions include 17-24 (AHIDAGKT), 81-85 (DTPGH), and 135-138 (NKMD).

Belongs to the TRAFAC class translation factor GTPase superfamily. Classic translation factor GTPase family. EF-G/EF-2 subfamily.

The protein resides in the cytoplasm. Its function is as follows. Catalyzes the GTP-dependent ribosomal translocation step during translation elongation. During this step, the ribosome changes from the pre-translocational (PRE) to the post-translocational (POST) state as the newly formed A-site-bound peptidyl-tRNA and P-site-bound deacylated tRNA move to the P and E sites, respectively. Catalyzes the coordinated movement of the two tRNA molecules, the mRNA and conformational changes in the ribosome. This chain is Elongation factor G, found in Halothermothrix orenii (strain H 168 / OCM 544 / DSM 9562).